Reading from the N-terminus, the 159-residue chain is Ribosomal RNA large subunit methyltransferase H (159 aa).

S-adenosyl-L-methionine is bound by residues Gly108 and 127–132 (FGKLTM).

Belongs to the RNA methyltransferase RlmH family. In terms of assembly, homodimer.

It localises to the cytoplasm. It catalyses the reaction pseudouridine(1915) in 23S rRNA + S-adenosyl-L-methionine = N(3)-methylpseudouridine(1915) in 23S rRNA + S-adenosyl-L-homocysteine + H(+). Specifically methylates the pseudouridine at position 1915 (m3Psi1915) in 23S rRNA. This Lactobacillus acidophilus (strain ATCC 700396 / NCK56 / N2 / NCFM) protein is Ribosomal RNA large subunit methyltransferase H.